Consider the following 204-residue polypeptide: UPF0056 membrane protein TC_0241 (204 aa).

Helical transmembrane passes span 8–28 (LTLL…FVAL), 46–66 (IFAL…FRLL), 68–88 (VSLP…AINM), 107–127 (IFYP…STLG), 138–158 (LVLG…FFSS), and 176–196 (FGIS…STAF).

It belongs to the UPF0056 (MarC) family.

It localises to the cell membrane. This is UPF0056 membrane protein TC_0241 from Chlamydia muridarum (strain MoPn / Nigg).